Consider the following 164-residue polypeptide: Small ribosomal subunit protein uS5 (164 aa).

Positions 10-73 constitute an S5 DRBM domain; it reads LEERVVAINR…EAAKKNMIEV (64 aa).

The protein belongs to the universal ribosomal protein uS5 family. As to quaternary structure, part of the 30S ribosomal subunit. Contacts proteins S4 and S8.

Its function is as follows. With S4 and S12 plays an important role in translational accuracy. Located at the back of the 30S subunit body where it stabilizes the conformation of the head with respect to the body. In Streptococcus pyogenes serotype M1, this protein is Small ribosomal subunit protein uS5.